A 473-amino-acid polypeptide reads, in one-letter code: Aspartyl/glutamyl-tRNA(Asn/Gln) amidotransferase subunit B (473 aa).

It belongs to the GatB/GatE family. GatB subfamily. As to quaternary structure, heterotrimer of A, B and C subunits.

It catalyses the reaction L-glutamyl-tRNA(Gln) + L-glutamine + ATP + H2O = L-glutaminyl-tRNA(Gln) + L-glutamate + ADP + phosphate + H(+). The enzyme catalyses L-aspartyl-tRNA(Asn) + L-glutamine + ATP + H2O = L-asparaginyl-tRNA(Asn) + L-glutamate + ADP + phosphate + 2 H(+). Functionally, allows the formation of correctly charged Asn-tRNA(Asn) or Gln-tRNA(Gln) through the transamidation of misacylated Asp-tRNA(Asn) or Glu-tRNA(Gln) in organisms which lack either or both of asparaginyl-tRNA or glutaminyl-tRNA synthetases. The reaction takes place in the presence of glutamine and ATP through an activated phospho-Asp-tRNA(Asn) or phospho-Glu-tRNA(Gln). This chain is Aspartyl/glutamyl-tRNA(Asn/Gln) amidotransferase subunit B, found in Francisella tularensis subsp. mediasiatica (strain FSC147).